The following is a 123-amino-acid chain: Small ribosomal subunit protein uS12 (123 aa).

At Asp-89 the chain carries 3-methylthioaspartic acid. The interval 101–123 (TLDTQGVKDRRQRRSKYGAKRPK) is disordered. Over residues 110–123 (RRQRRSKYGAKRPK) the composition is skewed to basic residues.

The protein belongs to the universal ribosomal protein uS12 family. As to quaternary structure, part of the 30S ribosomal subunit. Contacts proteins S8 and S17. May interact with IF1 in the 30S initiation complex.

With S4 and S5 plays an important role in translational accuracy. Its function is as follows. Interacts with and stabilizes bases of the 16S rRNA that are involved in tRNA selection in the A site and with the mRNA backbone. Located at the interface of the 30S and 50S subunits, it traverses the body of the 30S subunit contacting proteins on the other side and probably holding the rRNA structure together. The combined cluster of proteins S8, S12 and S17 appears to hold together the shoulder and platform of the 30S subunit. This Paramagnetospirillum magneticum (strain ATCC 700264 / AMB-1) (Magnetospirillum magneticum) protein is Small ribosomal subunit protein uS12.